We begin with the raw amino-acid sequence, 213 residues long: Transmembrane protein 186 (213 aa).

Residues 1–79 are Mitochondrial matrix-facing; that stretch reads MAALLRAVRR…FLSRLKLAQT (79 aa). A helical membrane pass occupies residues 80–100; it reads ALTVVALPPGYYLYSQGLLTL. Topologically, residues 101–102 are mitochondrial intermembrane; that stretch reads NT. The chain crosses the membrane as a helical span at residues 103–123; sequence VCLMSGISGFALTMLCWMSYF. Residues 124–213 are Mitochondrial matrix-facing; it reads LRRLVGILYL…QVFGVHQMLK (90 aa).

Belongs to the TMEM186 family. Part of the mitochondrial complex I assembly/MCIA complex that comprises at least the core subunits TMEM126B, NDUFAF1, ECSIT and ACAD9 and complement subunits such as COA1 and TMEM186. Interacts with MT-ND3.

It is found in the mitochondrion inner membrane. Functionally, as part of the MCIA complex, required for efficient assembly of the mitochondrial complex I. The polypeptide is Transmembrane protein 186 (Homo sapiens (Human)).